The chain runs to 93 residues: Large ribosomal subunit protein eL43 (93 aa).

A C4-type zinc finger spans residues Cys-39–Cys-60.

The protein belongs to the eukaryotic ribosomal protein eL43 family.

The protein is Large ribosomal subunit protein eL43 (RPL37A) of Brassica rapa subsp. rapa (Turnip).